A 953-amino-acid chain; its full sequence is Zinc finger CCCH domain-containing protein 18 (953 aa).

Met1 is modified (N-acetylmethionine). The segment covering 1-14 (MDVAESPERDPHSP) has biased composition (basic and acidic residues). Disordered stretches follow at residues 1 to 222 (MDVA…RPRP) and 391 to 928 (QYTE…LSRR). Ser6 carries the post-translational modification Phosphoserine. The span at 15 to 26 (EDEEQPQGLSDD) shows a compositional bias: acidic residues. 9 positions are modified to phosphoserine: Ser34, Ser46, Ser53, Ser59, Ser67, Ser74, Ser78, Ser83, and Ser95. Acidic residues predominate over residues 60-72 (QEEEDNHSDEEDR). The span at 97-106 (CEEEGDEGEE) shows a compositional bias: acidic residues. Positions 105 to 134 (EEDRTSDLRDEASSVTRELDEHELDYDEEV) form a coiled coil. A compositionally biased stretch (basic and acidic residues) spans 107 to 124 (DRTSDLRDEASSVTRELD). Thr109 is subject to Phosphothreonine. Ser110 and Ser118 each carry phosphoserine. Composition is skewed to acidic residues over residues 125-136 (EHELDYDEEVPE) and 143-158 (QEDEAEKAGAEDDEEK). Basic and acidic residues predominate over residues 159-168 (GEGTPREEGK). Thr162 is subject to Phosphothreonine. A phosphoserine mark is found at Ser173 and Ser179. The segment covering 175–190 (GEKESLEAAKEKKKED) has biased composition (basic and acidic residues). A compositionally biased stretch (acidic residues) spans 191 to 207 (DDGEIDDGEIDDDDLEE). Over residues 208–217 (GEVKDPSDRK) the composition is skewed to basic and acidic residues. The C3H1-type zinc finger occupies 219-245 (RPRPTCRFFMKGNCTWGMNCRFIHPGV). Basic and acidic residues predominate over residues 396 to 482 (EPYHNYRERE…EKEREKEKGK (87 aa)). Positions 399–464 (HNYRERERER…RERAKRDEKD (66 aa)) form a coiled coil. At Ser487 the chain carries Phosphoserine. Lys510 participates in a covalent cross-link: Glycyl lysine isopeptide (Lys-Gly) (interchain with G-Cter in SUMO2). A compositionally biased stretch (basic and acidic residues) spans 510–520 (KRADEWKDPWR). Residues Ser532, Ser534, and Ser536 each carry the phosphoserine modification. A compositionally biased stretch (low complexity) spans 545–606 (SASSASASNS…SRSRSFSSSP (62 aa)). Residues Lys622 and Lys661 each participate in a glycyl lysine isopeptide (Lys-Gly) (interchain with G-Cter in SUMO2) cross-link. The span at 661-670 (KPGDPREARR) shows a compositional bias: basic and acidic residues. Composition is skewed to low complexity over residues 692–725 (GSSYSGSSSRSRSLSVSSVSSVSSATSSSSSAHS) and 736–750 (ASPVSSASSRSPAPA). The segment covering 760-774 (KKEDGVKEEKRKRDS) has biased composition (basic and acidic residues). Lys766 is covalently cross-linked (Glycyl lysine isopeptide (Lys-Gly) (interchain with G-Cter in SUMO2)). The segment covering 778–798 (PPKSAKPPAGGKSSQQPSTPQ) has biased composition (low complexity). Position 814 is an N6-acetyllysine (Lys814). Residue Lys817 forms a Glycyl lysine isopeptide (Lys-Gly) (interchain with G-Cter in SUMO2) linkage. Positions 824–841 (AADKGSRKRYEPSDKDRQ) are enriched in basic and acidic residues. Ser842, Ser852, Ser868, Ser893, and Ser896 each carry phosphoserine. A compositionally biased stretch (low complexity) spans 893-906 (SPQSKSSSKVTSVP). A Glycyl lysine isopeptide (Lys-Gly) (interchain with G-Cter in SUMO2) cross-link involves residue Lys908. The span at 916–925 (STKSGKASTL) shows a compositional bias: polar residues. Residues 921–950 (KASTLSRREELLKQLKAVEDAIARKRAKIP) adopt a coiled-coil conformation.

In terms of assembly, interacts with ZFC3H1 in a RNase-insensitive manner.

Its subcellular location is the nucleus. The sequence is that of Zinc finger CCCH domain-containing protein 18 from Homo sapiens (Human).